We begin with the raw amino-acid sequence, 949 residues long: MDPTRPPFRGSPFHTPLGVRPPVLETKEEGPHGRAVLLPRGRALLGASAPSSDTTQRDPSDSRNVLPALFRGMGIETKPSGIPGRGGPVFGRGFLSTMSSGDGPDQPLSEPSIRPSLSTRVQQASDFSTERVALGRARFPIPPVSMEKPHVPTGRGLLFPSVLPTLTSDPVPKESPIATLQIEKEEKWEPLPKKGSKGSPCQLGLNLIKINFQNEAVYQYHVTFTPIVECRSMRFGMMKDHRSVTGPVTAFDGSILYLPVKLAQTVELESERRTDGQKIKITIQMTKILDPSSDLCLPFYNVVMRRVFKILDLKLVGRNFYDPASSTVLQQYRLQVWPGYAANIRKTDGGLFLLVDITHKIIRSDSVLDIMNILYQQSPENFQDEVTKQLVGSIVITRYNNRTYRIDDIEWNMSPKDSFSMSDGSKISFIDYYSKNYGITVKELDQPLLLHRPSERKAPKGKALDIVLLLPELAFMTGIPEKMRKDFRAMKDLTQQIHLSPKQHHISLGKLLKRIESSADAKNELQRWGLFLDTDIHMTTGRILPIEKINLRNNSFPAGEDLNWNREVTREACRSSVHLLYWAMIYPKRASAQAQELSSMLERIGGPIGIRVNHPNCVELRDDRVETYARSIKSLLEGEGKVQLLVCLISGTRDDLYGAIKKLCCVQNPVPSQVINTRTISQPQKLRSIAQKILLQINCKLGGELWGVDIPLKSVMVIGMDVYHDPSRGMRSVLGFVASINSCLTAWYSRVVFQLPNQEIMDSLKLCLVAALQKFFEVNHSLPEKIVVYRDGVSDGQLNTVENYEIPQLQTCFQTFDNYNPRMVVIVVQKRVSTNLYSTATGQFLTPQPGTVIDHTVTNRKWIDFFLMSHHVRQGCGIPTHYICVMNTANLGPDHLQRLTFKLCHMYWNWPGTIRVPAPCKYAHKLAFLSGQFLHHEPSIKLCDKLFFL.

The segment at 1-125 is disordered; it reads MDPTRPPFRG…SLSTRVQQAS (125 aa). Polar residues predominate over residues 115-125; it reads PSLSTRVQQAS. The 113-residue stretch at 366-478 folds into the PAZ domain; that stretch reads SVLDIMNILY…LLPELAFMTG (113 aa). The 292-residue stretch at 644–935 folds into the Piwi domain; the sequence is LLVCLISGTR…LAFLSGQFLH (292 aa). Catalysis depends on residues Asp721, Glu759, Asp791, and His924.

This sequence belongs to the argonaute family. Piwi subfamily. In terms of assembly, component of the PET complex. Mg(2+) serves as cofactor. Post-translationally, methylated on arginine residues; required for the interaction with Tudor domain-containing protein and subsequent localization to the meiotic nuage, also named P granule. In terms of tissue distribution, expressed in oocytes, testis and liver (at protein level).

It localises to the cytoplasm. It is found in the nucleus. Functionally, endoribonuclease that plays a central role during spermatogenesis by repressing transposable elements and preventing their mobilization, which is essential for the germline integrity. Plays an essential role in meiotic differentiation of spermatocytes, germ cell differentiation and in self-renewal of spermatogonial stem cells. Acts via the piRNA metabolic process, which mediates the repression of transposable elements during meiosis by forming complexes composed of piRNAs and Piwi proteins and govern the methylation and subsequent repression of transposons. During piRNA biosynthesis, plays a key role in the piRNA amplification loop, also named ping-pong amplification cycle, by acting as a 'slicer-competent' piRNA endoribonuclease that cleaves primary piRNAs, which are then loaded onto 'slicer-incompetent' piwil4. Piwil2 slicing produces a pre-miRNA intermediate, which is then processed in mature piRNAs, and as well as a 16 nucleotide by-product that is degraded. Required for piwil4/miwi2 nuclear localization and association with secondary piRNAs antisense. Represses circadian rhythms by promoting the stability and activity of core clock components BMAL1 and CLOCK. The chain is Piwi-like protein 2 (piwil2) from Xenopus tropicalis (Western clawed frog).